The primary structure comprises 600 residues: Zinc metalloproteinase-disintegrin-like stejnihagin-A (600 aa).

A signal peptide spans 1–20 (MIEVLLVTICLAVFPYQGSS). The propeptide occupies 21–191 (IILESGNVND…KASQLVVTAE (171 aa)). Gln-192 is modified (pyrrolidone carboxylic acid). The 192-residue stretch at 198–389 (RYVKLAIVAD…YNPQCILNAP (192 aa)) folds into the Peptidase M12B domain. 3 cysteine pairs are disulfide-bonded: Cys-306/Cys-384, Cys-346/Cys-368, and Cys-348/Cys-351. Residue Asn-317 is glycosylated (N-linked (GlcNAc...) asparagine). Position 331 (His-331) interacts with Zn(2+). The active site involves Glu-332. Positions 335 and 341 each coordinate Zn(2+). Asn-367 is a glycosylation site (N-linked (GlcNAc...) asparagine). The 87-residue stretch at 397–483 (PPVCGNELLE…DCPTDDFHRN (87 aa)) folds into the Disintegrin domain. Residues Val-399, Asn-402, Leu-404, Glu-406, Glu-409, and Asp-412 each coordinate Ca(2+). 14 disulfide bridges follow: Cys-400-Cys-429, Cys-411-Cys-424, Cys-413-Cys-419, Cys-423-Cys-446, Cys-437-Cys-443, Cys-442-Cys-468, Cys-455-Cys-475, Cys-462-Cys-494, Cys-487-Cys-499, Cys-506-Cys-556, Cys-521-Cys-565, Cys-534-Cys-544, Cys-551-Cys-587, and Cys-581-Cys-593. The D/ECD-tripeptide signature appears at 461-463 (ECD). Residue Asn-568 is glycosylated (N-linked (GlcNAc...) asparagine).

Belongs to the venom metalloproteinase (M12B) family. P-III subfamily. P-IIIa sub-subfamily. Monomer. The cofactor is Zn(2+). In terms of tissue distribution, expressed by the venom gland.

It is found in the secreted. This metalloproteinase-disintegrin-like impairs hemostasis in the envenomed animal. This chain is Zinc metalloproteinase-disintegrin-like stejnihagin-A, found in Trimeresurus stejnegeri (Chinese green tree viper).